A 337-amino-acid chain; its full sequence is Cytoskeleton protein RodZ (337 aa).

Topologically, residues 1–111 (MNTEATHDQN…LGKRRKKRDG (111 aa)) are cytoplasmic. Residues 19 to 71 (LRNAREQLGLSQQAVAERLCLKVSTVRDIEEDKAPADLASTFLRGYIRSYARL) form the HTH cro/C1-type domain. The H-T-H motif DNA-binding region spans 30 to 49 (QQAVAERLCLKVSTVRDIEE). A helical; Signal-anchor for type II membrane protein transmembrane segment spans residues 112–132 (WLMTFTWLVLFVVIGLSGAWW). The Periplasmic portion of the chain corresponds to 133–337 (WQDHKAQQEE…TLNAEQSPAQ (205 aa)). Over residues 145 to 167 (TMADQSSAELSSNSEQGQSVPLN) the composition is skewed to polar residues. Residues 145–235 (TMADQSSAEL…PTAATTPDGA (91 aa)) form a disordered region. Residues 168-207 (TSTTTDPATTSTPPASVDTTATNTQTPAVTAPAPAVDPQQ) are compositionally biased toward low complexity. Polar residues predominate over residues 208–218 (NAVVSPSQANV). The segment covering 219–235 (DTAATPAPTAATTPDGA) has biased composition (low complexity).

It belongs to the RodZ family.

It is found in the cell inner membrane. In terms of biological role, cytoskeletal protein that is involved in cell-shape control through regulation of the length of the long axis. The sequence is that of Cytoskeleton protein RodZ from Shigella boydii serotype 4 (strain Sb227).